We begin with the raw amino-acid sequence, 286 residues long: Ribosomal RNA small subunit methyltransferase H (286 aa).

S-adenosyl-L-methionine contacts are provided by residues 25–27, D45, L79, D93, and Q100; that span reads GGH.

This sequence belongs to the methyltransferase superfamily. RsmH family.

It is found in the cytoplasm. The enzyme catalyses cytidine(1402) in 16S rRNA + S-adenosyl-L-methionine = N(4)-methylcytidine(1402) in 16S rRNA + S-adenosyl-L-homocysteine + H(+). Specifically methylates the N4 position of cytidine in position 1402 (C1402) of 16S rRNA. The sequence is that of Ribosomal RNA small subunit methyltransferase H from Petrotoga mobilis (strain DSM 10674 / SJ95).